The primary structure comprises 92 residues: Small ribosomal subunit protein uS19c (92 aa).

The protein belongs to the universal ribosomal protein uS19 family.

It localises to the plastid. It is found in the chloroplast. In terms of biological role, protein S19 forms a complex with S13 that binds strongly to the 16S ribosomal RNA. This Cycas taitungensis (Prince sago) protein is Small ribosomal subunit protein uS19c.